The primary structure comprises 181 residues: Lysozyme A (181 aa).

The signal sequence occupies residues 1–19 (MRIAFFLLVLAVIIGFAYG). The propeptide occupies 139 to 181 (LTDSRPLGPFNVTESEMAQLFIDHEIAMAQCEAEKTCNGFDLE).

This sequence belongs to the dictyostelium lysozyme family. Post-translationally, contains six disulfide bonds.

It localises to the cytoplasmic vesicle lumen. The enzyme catalyses Hydrolysis of 1,4-beta-linkages between N-acetylmuramic acid and N-acetyl-D-glucosamine residues in a peptidoglycan.. In terms of biological role, has antibacterial activity against the Gram-positive bacteria B.subtilis, B.megaterium and M.luteus. No antibacterial activity detected against the Gram-positive bacterium S.aureus or against the Gram-negative bacterium E.coli. Lacks chitinase activity. This is Lysozyme A from Dictyostelium discoideum (Social amoeba).